The sequence spans 120 residues: Large ribosomal subunit protein bL20 (120 aa).

Belongs to the bacterial ribosomal protein bL20 family.

Its function is as follows. Binds directly to 23S ribosomal RNA and is necessary for the in vitro assembly process of the 50S ribosomal subunit. It is not involved in the protein synthesizing functions of that subunit. The polypeptide is Large ribosomal subunit protein bL20 (Novosphingobium aromaticivorans (strain ATCC 700278 / DSM 12444 / CCUG 56034 / CIP 105152 / NBRC 16084 / F199)).